Consider the following 574-residue polypeptide: 2-succinyl-5-enolpyruvyl-6-hydroxy-3-cyclohexene-1-carboxylate synthase (574 aa).

This sequence belongs to the TPP enzyme family. MenD subfamily. In terms of assembly, homodimer. It depends on Mg(2+) as a cofactor. Mn(2+) is required as a cofactor. Thiamine diphosphate serves as cofactor.

It catalyses the reaction isochorismate + 2-oxoglutarate + H(+) = 5-enolpyruvoyl-6-hydroxy-2-succinyl-cyclohex-3-ene-1-carboxylate + CO2. Its pathway is quinol/quinone metabolism; 1,4-dihydroxy-2-naphthoate biosynthesis; 1,4-dihydroxy-2-naphthoate from chorismate: step 2/7. It functions in the pathway quinol/quinone metabolism; menaquinone biosynthesis. Its function is as follows. Catalyzes the thiamine diphosphate-dependent decarboxylation of 2-oxoglutarate and the subsequent addition of the resulting succinic semialdehyde-thiamine pyrophosphate anion to isochorismate to yield 2-succinyl-5-enolpyruvyl-6-hydroxy-3-cyclohexene-1-carboxylate (SEPHCHC). This Rubrobacter xylanophilus (strain DSM 9941 / JCM 11954 / NBRC 16129 / PRD-1) protein is 2-succinyl-5-enolpyruvyl-6-hydroxy-3-cyclohexene-1-carboxylate synthase.